The chain runs to 195 residues: Inner membrane protein YohC (195 aa).

Over 1–32 the chain is Cytoplasmic; the sequence is MSHVWGLFSHPDREMQVINRENETISHHYTHH. Residues 33 to 55 form a helical membrane-spanning segment; that stretch reads VLLMAAIPVICAFIGTTQIGWNF. Over 56–64 the chain is Periplasmic; it reads GDGTILKLS. Residues 65–87 traverse the membrane as a helical segment; it reads WFTGLALAVLFYGVMLAGVAVMG. Residues 88 to 107 are Cytoplasmic-facing; that stretch reads RVIWWMARNYPQRPSLAHCM. Residues 108–130 form a helical membrane-spanning segment; that stretch reads VFAGYVATPLFLSGLVALYPLVW. Over 131 to 134 the chain is Periplasmic; sequence LCAL. Residues 135 to 157 form a helical membrane-spanning segment; sequence VGTVALFYTGYLLYLGIPSFLNI. At 158 to 169 the chain is on the cytoplasmic side; that stretch reads NKEEGLSFSSST. Residues 170-192 form a helical membrane-spanning segment; sequence LAIGVLVLEVLLALTVILWGYGY. The Periplasmic segment spans residues 193–195; it reads RLF.

The protein resides in the cell inner membrane. This Escherichia coli O6:H1 (strain CFT073 / ATCC 700928 / UPEC) protein is Inner membrane protein YohC (yohC).